Consider the following 495-residue polypeptide: Lysine--tRNA ligase (495 aa).

Residues Glu-406 and Glu-413 each contribute to the Mg(2+) site.

Belongs to the class-II aminoacyl-tRNA synthetase family. Homodimer. Mg(2+) serves as cofactor.

Its subcellular location is the cytoplasm. It catalyses the reaction tRNA(Lys) + L-lysine + ATP = L-lysyl-tRNA(Lys) + AMP + diphosphate. The sequence is that of Lysine--tRNA ligase from Leptospira borgpetersenii serovar Hardjo-bovis (strain JB197).